We begin with the raw amino-acid sequence, 458 residues long: UDP-N-acetylmuramate--L-alanine ligase (458 aa).

118–124 lines the ATP pocket; the sequence is GTHGKTT.

Belongs to the MurCDEF family.

Its subcellular location is the cytoplasm. The catalysed reaction is UDP-N-acetyl-alpha-D-muramate + L-alanine + ATP = UDP-N-acetyl-alpha-D-muramoyl-L-alanine + ADP + phosphate + H(+). The protein operates within cell wall biogenesis; peptidoglycan biosynthesis. In terms of biological role, cell wall formation. The polypeptide is UDP-N-acetylmuramate--L-alanine ligase (Clostridium botulinum (strain Okra / Type B1)).